The chain runs to 118 residues: C-X-C motif chemokine 17 (118 aa).

An N-terminal signal peptide occupies residues 1–22 (MKVLISSLLLLLPLMLMSVVSS). 2 cysteine pairs are disulfide-bonded: cysteine 74/cysteine 102 and cysteine 76/cysteine 109.

The protein belongs to the intercrine alpha (chemokine CxC) family.

The protein resides in the secreted. In terms of biological role, chemokine that acts as a chemoattractant for monocytes, macrophages and dendritic cells. Plays a role in angiogenesis and possibly in the development of tumors. Acts as an anti-inflammatory in the stomach. May play a role in the innate defense against infections. Activates the C-X-C chemokine receptor GPR35 to induce a rapid and transient rise in the level of intracellular calcium ions. In Bos taurus (Bovine), this protein is C-X-C motif chemokine 17 (CXCL17).